Here is a 477-residue protein sequence, read N- to C-terminus: Ribulose bisphosphate carboxylase large chain (477 aa).

Positions 1–2 (MS) are excised as a propeptide. Pro3 is subject to N-acetylproline. An N6,N6,N6-trimethyllysine modification is found at Lys14. Positions 123 and 173 each coordinate substrate. Lys175 acts as the Proton acceptor in catalysis. Residue Lys177 coordinates substrate. Positions 201, 203, and 204 each coordinate Mg(2+). An N6-carboxylysine modification is found at Lys201. The Proton acceptor role is filled by His294. Substrate-binding residues include Arg295, His327, and Ser379.

The protein belongs to the RuBisCO large chain family. Type I subfamily. In terms of assembly, heterohexadecamer of 8 large chains and 8 small chains; disulfide-linked. The disulfide link is formed within the large subunit homodimers. The cofactor is Mg(2+). The disulfide bond which can form in the large chain dimeric partners within the hexadecamer appears to be associated with oxidative stress and protein turnover.

Its subcellular location is the plastid. The protein localises to the chloroplast. It carries out the reaction 2 (2R)-3-phosphoglycerate + 2 H(+) = D-ribulose 1,5-bisphosphate + CO2 + H2O. It catalyses the reaction D-ribulose 1,5-bisphosphate + O2 = 2-phosphoglycolate + (2R)-3-phosphoglycerate + 2 H(+). Its function is as follows. RuBisCO catalyzes two reactions: the carboxylation of D-ribulose 1,5-bisphosphate, the primary event in carbon dioxide fixation, as well as the oxidative fragmentation of the pentose substrate in the photorespiration process. Both reactions occur simultaneously and in competition at the same active site. This Solanum lycopersicum (Tomato) protein is Ribulose bisphosphate carboxylase large chain (rbcL).